Consider the following 373-residue polypeptide: Ca(2+)/H(+) antiporter (373 aa).

11 helical membrane-spanning segments follow: residues 6-26 (TIFFGLLLFIPISLLGHWLHW), 29-49 (VSIFLTASLAIIPLAAFMGEA), 61-81 (LGGLLNATFGNATELILAFIA), 94-114 (ITGSIISNLLLVMGFAMLLGG), 134-154 (MNLAVIAILLPTAVEHTSNGI), 162-182 (LSVAVAIVLIIVYGLTLLFSM), 220-240 (FWLGILLVVTITVAIESELLV), 249-269 (SLGLTALFTGVILLPVIGNAA), 291-311 (VGSTLQIALFVAPVLVIAGWI), 318-338 (LDFNPFELVAVAVSVLIANSI), and 349-369 (GSLLLATYIVIGLAFFFHPVV).

This sequence belongs to the Ca(2+):cation antiporter (CaCA) (TC 2.A.19) family. Cation/proton exchanger (CAX) subfamily.

It localises to the cell inner membrane. Ca(+)/H(+) antiporter that extrudes calcium in exchange for external protons. Plays an important role in salt tolerance. Does not transport sodium or lithium. The polypeptide is Ca(2+)/H(+) antiporter (Aphanothece halophytica).